Consider the following 342-residue polypeptide: Phenylalanine--tRNA ligase alpha subunit (342 aa).

Glutamate 260 provides a ligand contact to Mg(2+).

The protein belongs to the class-II aminoacyl-tRNA synthetase family. Phe-tRNA synthetase alpha subunit type 1 subfamily. Tetramer of two alpha and two beta subunits. Mg(2+) is required as a cofactor.

The protein resides in the cytoplasm. It catalyses the reaction tRNA(Phe) + L-phenylalanine + ATP = L-phenylalanyl-tRNA(Phe) + AMP + diphosphate + H(+). In Mycobacterium avium (strain 104), this protein is Phenylalanine--tRNA ligase alpha subunit.